Here is a 368-residue protein sequence, read N- to C-terminus: Ubl carboxyl-terminal hydrolase 18 (368 aa).

A mediates interaction with IFNAR2 region spans residues 31–48; sequence MKRKRVLSRDLCSAWDSP. Residues 48–109 are mediates interaction with STAT2; it reads PHGLVGLHNI…LLLLLEKMQD (62 aa). A USP domain is found at 52–366; that stretch reads VGLHNIGQTC…TAYLLVYTKT (315 aa). Cys61 serves as the catalytic Nucleophile. The tract at residues 299-308 is mediates interaction with STAT2 and necessary for the negative regulation of the type I IFN signaling pathway; sequence ELFAVIAHVG. The tract at residues 309–368 is mediates interaction with IFNAR2; that stretch reads MADFGHYCAYIRNPVDGKWFCFNDSHVCWVTWKDVQCTYGNHRYRWRETAYLLVYTKTGS. His314 serves as the catalytic Proton acceptor.

This sequence belongs to the peptidase C19 family. Interacts with STAT2; the interaction is direct. Interacts with IFNAR2; indirectly via STAT2, it negatively regulates the assembly of the ternary interferon-IFNAR1-IFNAR2 complex and inhibits type I interferon signaling. Interacts with STING1. Interacts with USP20.

It catalyses the reaction Thiol-dependent hydrolysis of ester, thioester, amide, peptide and isopeptide bonds formed by the C-terminal Gly of ubiquitin (a 76-residue protein attached to proteins as an intracellular targeting signal).. Functionally, interferon-induced ISG15-specific protease that plays a crucial role for maintaining a proper balance of ISG15-conjugated proteins in cells. Regulates protein ISGylation by efficiently cleaving ISG15 conjugates linked via isopeptide bonds. Regulates T-cell activation and T-helper 17 (Th17) cell differentiation by deubiquitinating TAK1, likely to keep TAK1-TAB complexes in steady conditions. In turn, restricts activation of NF-kappa-B, NFAT, and JNK as well as expression of IL2 in T-cells after TCR activation. Acts as a molecular adapter with USP20 to promote innate antiviral response through deubiquitinating STING1. Involved also in the negative regulation of the inflammatory response triggered by type I interferon. Upon recruitment by STAT2 to the type I interferon receptor subunit IFNAR2 interferes with the assembly of the ternary interferon-IFNAR1-IFNAR2 complex and acts as a negative regulator of the type I interferon signaling pathway. This Mus musculus (Mouse) protein is Ubl carboxyl-terminal hydrolase 18 (Usp18).